Reading from the N-terminus, the 233-residue chain is Proteasome subunit alpha (233 aa).

The protein belongs to the peptidase T1A family. In terms of assembly, the 20S proteasome core is composed of 14 alpha and 14 beta subunits that assemble into four stacked heptameric rings, resulting in a barrel-shaped structure. The two inner rings, each composed of seven catalytic beta subunits, are sandwiched by two outer rings, each composed of seven alpha subunits. The catalytic chamber with the active sites is on the inside of the barrel. Has a gated structure, the ends of the cylinder being occluded by the N-termini of the alpha-subunits. Is capped at one or both ends by the proteasome regulatory ATPase, PAN. The N-terminus is blocked.

It is found in the cytoplasm. The formation of the proteasomal ATPase PAN-20S proteasome complex, via the docking of the C-termini of PAN into the intersubunit pockets in the alpha-rings, triggers opening of the gate for substrate entry. Interconversion between the open-gate and close-gate conformations leads to a dynamic regulation of the 20S proteasome proteolysis activity. Component of the proteasome core, a large protease complex with broad specificity involved in protein degradation. The T.acidophilum proteasome is able to cleave oligopeptides after Tyr, Leu, Phe, and to a lesser extent after Glu and Arg. Thus, displays chymotrypsin-like activity and low level of caspase-like and trypsin-like activities. In Thermoplasma acidophilum (strain ATCC 25905 / DSM 1728 / JCM 9062 / NBRC 15155 / AMRC-C165), this protein is Proteasome subunit alpha.